The primary structure comprises 613 residues: Cilia- and flagella-associated protein 100 (613 aa).

A disordered region spans residues 36–55 (KSKESKKNKGNVTISDRSSN). The span at 45–55 (GNVTISDRSSN) shows a compositional bias: polar residues. 4 coiled-coil regions span residues 167-198 (ALAM…FLEK), 233-260 (VEIR…KHYK), 396-435 (FTKL…DKEV), and 504-580 (GTVQ…RGRK).

The protein belongs to the CFAP100 family.

It localises to the cytoplasm. The protein localises to the cytoskeleton. It is found in the cilium axoneme. In terms of biological role, may play a role in ciliary/flagellar motility by regulating the assembly and the activity of axonemal inner dynein arm. The protein is Cilia- and flagella-associated protein 100 of Mus musculus (Mouse).